The primary structure comprises 204 residues: Holliday junction branch migration complex subunit RuvA (204 aa).

The segment at 1–67 (MIGYLEGKIL…QPKPVLIGFN (67 aa)) is domain I. The interval 68-145 (SLEEREFFER…VFAGEHGGEP (78 aa)) is domain II. The segment at 146-156 (AGPAPVEENFH) is flexible linker. The tract at residues 156 to 204 (HLLVLDVLVNQLGHKAAEAKELINQAIKRNPAISSPEELFDEVYRGETG) is domain III.

It belongs to the RuvA family. As to quaternary structure, homotetramer. Forms an RuvA(8)-RuvB(12)-Holliday junction (HJ) complex. HJ DNA is sandwiched between 2 RuvA tetramers; dsDNA enters through RuvA and exits via RuvB. An RuvB hexamer assembles on each DNA strand where it exits the tetramer. Each RuvB hexamer is contacted by two RuvA subunits (via domain III) on 2 adjacent RuvB subunits; this complex drives branch migration. In the full resolvosome a probable DNA-RuvA(4)-RuvB(12)-RuvC(2) complex forms which resolves the HJ.

The protein localises to the cytoplasm. Its function is as follows. The RuvA-RuvB-RuvC complex processes Holliday junction (HJ) DNA during genetic recombination and DNA repair, while the RuvA-RuvB complex plays an important role in the rescue of blocked DNA replication forks via replication fork reversal (RFR). RuvA specifically binds to HJ cruciform DNA, conferring on it an open structure. The RuvB hexamer acts as an ATP-dependent pump, pulling dsDNA into and through the RuvAB complex. HJ branch migration allows RuvC to scan DNA until it finds its consensus sequence, where it cleaves and resolves the cruciform DNA. This Desulfatibacillum aliphaticivorans protein is Holliday junction branch migration complex subunit RuvA.